The sequence spans 338 residues: Glycerol-3-phosphate dehydrogenase [NAD(P)+] (338 aa).

Positions 12, 13, and 110 each coordinate NADPH. Sn-glycerol 3-phosphate contacts are provided by lysine 110, glycine 141, and serine 143. Position 145 (alanine 145) interacts with NADPH. Residues lysine 196, aspartate 249, serine 259, arginine 260, and asparagine 261 each contribute to the sn-glycerol 3-phosphate site. The Proton acceptor role is filled by lysine 196. NADPH is bound at residue arginine 260. Residues valine 284 and glutamate 286 each coordinate NADPH.

This sequence belongs to the NAD-dependent glycerol-3-phosphate dehydrogenase family.

The protein localises to the cytoplasm. The catalysed reaction is sn-glycerol 3-phosphate + NAD(+) = dihydroxyacetone phosphate + NADH + H(+). It catalyses the reaction sn-glycerol 3-phosphate + NADP(+) = dihydroxyacetone phosphate + NADPH + H(+). It participates in membrane lipid metabolism; glycerophospholipid metabolism. In terms of biological role, catalyzes the reduction of the glycolytic intermediate dihydroxyacetone phosphate (DHAP) to sn-glycerol 3-phosphate (G3P), the key precursor for phospholipid synthesis. In Lactiplantibacillus plantarum (strain ATCC BAA-793 / NCIMB 8826 / WCFS1) (Lactobacillus plantarum), this protein is Glycerol-3-phosphate dehydrogenase [NAD(P)+].